We begin with the raw amino-acid sequence, 310 residues long: Ornithine carbamoyltransferase (310 aa).

Carbamoyl phosphate is bound by residues 58–61 (STRT), Q85, R109, and 136–139 (HPCQ). Residues N167, D227, and 231-232 (SM) contribute to the L-ornithine site. Residues 266–267 (CL) and R294 contribute to the carbamoyl phosphate site.

This sequence belongs to the aspartate/ornithine carbamoyltransferase superfamily. OTCase family.

The protein resides in the cytoplasm. The enzyme catalyses carbamoyl phosphate + L-ornithine = L-citrulline + phosphate + H(+). The protein operates within amino-acid biosynthesis; L-arginine biosynthesis; L-arginine from L-ornithine and carbamoyl phosphate: step 1/3. Reversibly catalyzes the transfer of the carbamoyl group from carbamoyl phosphate (CP) to the N(epsilon) atom of ornithine (ORN) to produce L-citrulline. This Rhodopseudomonas palustris (strain ATCC BAA-98 / CGA009) protein is Ornithine carbamoyltransferase.